A 494-amino-acid polypeptide reads, in one-letter code: UPF0371 protein SPJ_0333 (494 aa).

The protein belongs to the UPF0371 family.

This chain is UPF0371 protein SPJ_0333, found in Streptococcus pneumoniae (strain JJA).